We begin with the raw amino-acid sequence, 95 residues long: Large ribosomal subunit protein uL23 (95 aa).

This sequence belongs to the universal ribosomal protein uL23 family. In terms of assembly, part of the 50S ribosomal subunit. Contacts protein L29, and trigger factor when it is bound to the ribosome.

Functionally, one of the early assembly proteins it binds 23S rRNA. One of the proteins that surrounds the polypeptide exit tunnel on the outside of the ribosome. Forms the main docking site for trigger factor binding to the ribosome. The polypeptide is Large ribosomal subunit protein uL23 (Bacillus subtilis (strain 168)).